The following is a 550-amino-acid chain: Natural resistance-associated macrophage protein 1 (550 aa).

The segment at 1-45 (MTGDKGPQRLSGSSYGSISSPTSPTSPGPQQAPPRETYLSEKIPI) is disordered. Residues 1 to 58 (MTGDKGPQRLSGSSYGSISSPTSPTSPGPQQAPPRETYLSEKIPIPDTKPGTFSLRKL) are Cytoplasmic-facing. Residues 11-23 (SGSSYGSISSPTS) show a composition bias toward low complexity. A helical transmembrane segment spans residues 59–76 (WAFTGPGFLMSIAFLDPG). Residues 77-85 (NIESDLQAG) lie on the Extracellular side of the membrane. Residues 86-105 (AVAGFKLLWVLLWATVLGLL) form a helical membrane-spanning segment. At 106–142 (CQRLAARLGVVTGKDLGEVCHLYYPKVPRTVLWLTIE) the chain is on the cytoplasmic side. Residues 143-163 (LAIVGSDMQEVIGTAIAFNLL) traverse the membrane as a helical segment. At 164 to 167 (SAGR) the chain is on the extracellular side. Residues 168-187 (IPLWGGVLITIVDTFFFLFL) traverse the membrane as a helical segment. The Cytoplasmic segment spans residues 188–196 (DNYGLRKLE). Residues 197–217 (AFFGLLITIMALTFGYEYVVA) traverse the membrane as a helical segment. Residues 218-240 (RPEQGALLRGLFLPSCPGCGHPE) lie on the Extracellular side of the membrane. Residues 241-259 (LLQAVGIVGAIIMPHNIYL) traverse the membrane as a helical segment. The Cytoplasmic segment spans residues 260–287 (HSALVKSREIDRARRADIREANMYFLIE). A helical transmembrane segment spans residues 288–307 (ATIALSVSFIINLFVMAVFG). The Extracellular segment spans residues 308–349 (QAFYQKTNQAAFNICANSSLHDYAKIFPMNNATVAVDIYQGG). N-linked (GlcNAc...) asparagine glycans are attached at residues Asn324 and Asn338. A helical membrane pass occupies residues 350 to 369 (VILGCLFGPAALYIWAIGLL). Residues 370 to 400 (AAGQSSTMTGTYAGQFVMEGFLRLRWSRFAR) lie on the Cytoplasmic side of the membrane. The helical transmembrane segment at 401-418 (VLLTRSCAILPTVLVAVF) threads the bilayer. Residues 419–429 (RDLRDLSGLND) lie on the Extracellular side of the membrane. Residues 430–450 (LLNVLQSLLLPFAVLPILTFT) traverse the membrane as a helical segment. Topologically, residues 451 to 466 (SMPTLMQEFANGLLNK) are cytoplasmic. A helical transmembrane segment spans residues 467 to 488 (VVTSSIMVLVCAINLYFVVSYL). At 489–496 (PSLPHPAY) the chain is on the extracellular side. The chain crosses the membrane as a helical span at residues 497-516 (FGLAALLAAAYLGLSTYLVW). Residues 517–550 (TCCLAHGATFLAHSSHHHFLYGLLEEDQKGETSG) are Cytoplasmic-facing.

It belongs to the NRAMP family. In terms of tissue distribution, macrophages; peripheral blood leukocytes, lung, spleen and liver.

The protein localises to the late endosome membrane. Its subcellular location is the lysosome membrane. It catalyses the reaction Zn(2+)(in) + H(+)(out) = Zn(2+)(out) + H(+)(in). It carries out the reaction Fe(2+)(in) + H(+)(out) = Fe(2+)(out) + H(+)(in). The catalysed reaction is Mn(2+)(in) + H(+)(out) = Mn(2+)(out) + H(+)(in). Macrophage-specific antiporter that fluxes metal ions in either direction against a proton gradient. Localized to late endosomal lysosomal membranes, delivers bivalent cations from the cytosol into these acidic compartments where they may directly affect antimicrobial activity. Involved in iron metabolism and host natural resistance to infection with intracellular parasites. Pathogen resistance involves sequestration of Fe(2+) and Mn(2+), cofactors of both prokaryotic and eukaryotic catalases and superoxide dismutases, not only to protect the macrophage against its own generation of reactive oxygen species, but to deny the cations to the pathogen for synthesis of its protective enzymes. This chain is Natural resistance-associated macrophage protein 1, found in Homo sapiens (Human).